A 389-amino-acid polypeptide reads, in one-letter code: snRNA-activating protein complex subunit 1 (389 aa).

Residues 1–15 are compositionally biased toward low complexity; that stretch reads MGTPAGAGTRPTGAG. 3 disordered regions span residues 1–22, 245–276, and 290–389; these read MGTPAGAGTRPTGAGTVEGVGI, WHKERKNPSLKPKLKDGEENGEGSSEEPERCE, and SAVV…KRKC. The interval 20–187 is SNAPC3-binding; that stretch reads VGIPPGLQTD…QKFKDPNDRV (168 aa). Residues 183 to 287 form an SNAPC4-binding region; that stretch reads PNDRVMKLIT…AVSLAKIKAK (105 aa). A compositionally biased stretch (basic and acidic residues) spans 245 to 262; sequence WHKERKNPSLKPKLKDGE. Phosphoserine occurs at positions 308 and 309.

In terms of assembly, part of the SNAPc complex composed of 5 subunits: SNAPC1, SNAPC2, SNAPC3, SNAPC4 and SNAPC5. SNAPC1 interacts with SNAPC3, SNAPC4 and TBP.

The protein localises to the nucleus. Functionally, part of the SNAPc complex required for the transcription of both RNA polymerase II and III small-nuclear RNA genes. Binds to the proximal sequence element (PSE), a non-TATA-box basal promoter element common to these 2 types of genes. Recruits TBP and BRF2 to the U6 snRNA TATA box. The sequence is that of snRNA-activating protein complex subunit 1 (Snapc1) from Mus musculus (Mouse).